The following is a 296-amino-acid chain: Light-independent protochlorophyllide reductase iron-sulfur ATP-binding protein (296 aa).

Over residues 1–11 (MTSTITRKEDG) the composition is skewed to basic and acidic residues. Residues 1 to 20 (MTSTITRKEDGEGSVQVKQD) form a disordered region. ATP is bound by residues 39-44 (GIGKST) and Lys-68. Residue Ser-43 participates in Mg(2+) binding. Positions 124 and 158 each coordinate [4Fe-4S] cluster. 209 to 210 (NR) is a binding site for ATP.

The protein belongs to the NifH/BchL/ChlL family. As to quaternary structure, homodimer. Protochlorophyllide reductase is composed of three subunits; ChlL, ChlN and ChlB. [4Fe-4S] cluster is required as a cofactor.

It catalyses the reaction chlorophyllide a + oxidized 2[4Fe-4S]-[ferredoxin] + 2 ADP + 2 phosphate = protochlorophyllide a + reduced 2[4Fe-4S]-[ferredoxin] + 2 ATP + 2 H2O. Its pathway is porphyrin-containing compound metabolism; chlorophyll biosynthesis (light-independent). Its function is as follows. Component of the dark-operative protochlorophyllide reductase (DPOR) that uses Mg-ATP and reduced ferredoxin to reduce ring D of protochlorophyllide (Pchlide) to form chlorophyllide a (Chlide). This reaction is light-independent. The L component serves as a unique electron donor to the NB-component of the complex, and binds Mg-ATP. The protein is Light-independent protochlorophyllide reductase iron-sulfur ATP-binding protein of Prochlorococcus marinus (strain NATL1A).